The sequence spans 339 residues: MVIQKNWQELIKPNKLEVAPGHDPKRIATVVAEPLERGFGTTLGNALRRVLLSSLQGAAVTSVHIDGVLHEFSSIPGVREDVTDIVLNIKTIAIRSSSDTPKRMTLRKTGPGLVTAGDISTIGDIQILNPDLVLCTLDEGAEIRMEFTVATGKGYVPADRNRPEDAPIGLIPVDALFSPVTKVSYRIENTREGQDLDKDKLTMTVETNGAVSPEDALAYAARIIQDQLQIFVNFEEPRKEEAAPLAPQLPFNPALLKKVDELELSVRSANCLKNDNIVYIGDLIQKTEAEMLRTPNFGRKSLNEIKEVLAAMGLHLGMDVPGWPPENIEDLAKRFEEHY.

Positions 1-235 (MVIQKNWQEL…DQLQIFVNFE (235 aa)) are alpha N-terminal domain (alpha-NTD). Residues 251–339 (FNPALLKKVD…DLAKRFEEHY (89 aa)) form an alpha C-terminal domain (alpha-CTD) region.

This sequence belongs to the RNA polymerase alpha chain family. As to quaternary structure, homodimer. The RNAP catalytic core consists of 2 alpha, 1 beta, 1 beta' and 1 omega subunit. When a sigma factor is associated with the core the holoenzyme is formed, which can initiate transcription.

The enzyme catalyses RNA(n) + a ribonucleoside 5'-triphosphate = RNA(n+1) + diphosphate. DNA-dependent RNA polymerase catalyzes the transcription of DNA into RNA using the four ribonucleoside triphosphates as substrates. The chain is DNA-directed RNA polymerase subunit alpha from Methylobacterium nodulans (strain LMG 21967 / CNCM I-2342 / ORS 2060).